We begin with the raw amino-acid sequence, 288 residues long: Pyridoxal kinase PdxY (288 aa).

Residues serine 12 and 47 to 48 (TQ) each bind substrate. ATP contacts are provided by residues aspartate 114, glutamate 151, lysine 184, and 211 to 214 (RPLL). Position 225 (aspartate 225) interacts with substrate.

Belongs to the pyridoxine kinase family. PdxY subfamily. In terms of assembly, homodimer. Requires Mg(2+) as cofactor.

It catalyses the reaction pyridoxal + ATP = pyridoxal 5'-phosphate + ADP + H(+). The protein operates within cofactor metabolism; pyridoxal 5'-phosphate salvage; pyridoxal 5'-phosphate from pyridoxal: step 1/1. In terms of biological role, pyridoxal kinase involved in the salvage pathway of pyridoxal 5'-phosphate (PLP). Catalyzes the phosphorylation of pyridoxal to PLP. This Pseudomonas syringae pv. syringae (strain B728a) protein is Pyridoxal kinase PdxY.